The chain runs to 360 residues: DNA integrity scanning protein DisA (360 aa).

Residues 9-147 (DDEIIEVLRM…GSRKYILRET (139 aa)) form the DAC domain. ATP contacts are provided by residues glycine 76, leucine 94, and 107–111 (TRHKT).

The protein belongs to the DisA family. Homooctamer. Mg(2+) serves as cofactor.

It catalyses the reaction 2 ATP = 3',3'-c-di-AMP + 2 diphosphate. Its function is as follows. Participates in a DNA-damage check-point that is active prior to asymmetric division when DNA is damaged. DisA forms globular foci that rapidly scan along the chromosomes during sporulation, searching for lesions. When a lesion is present, DisA pauses at the lesion site. This triggers a cellular response that culminates in a temporary block in sporulation initiation. Functionally, also has diadenylate cyclase activity, catalyzing the condensation of 2 ATP molecules into cyclic di-AMP (c-di-AMP). c-di-AMP acts as a signaling molecule that couples DNA integrity with progression of sporulation. The rise in c-di-AMP level generated by DisA while scanning the chromosome, operates as a positive signal that advances sporulation; upon encountering a lesion, the DisA focus arrests at the damaged site and halts c-di-AMP synthesis. The polypeptide is DNA integrity scanning protein DisA (Acetivibrio thermocellus (strain ATCC 27405 / DSM 1237 / JCM 9322 / NBRC 103400 / NCIMB 10682 / NRRL B-4536 / VPI 7372) (Clostridium thermocellum)).